A 301-amino-acid chain; its full sequence is 4-diphosphocytidyl-2-C-methyl-D-erythritol kinase (301 aa).

The active site involves lysine 10. Residue 96–106 participates in ATP binding; the sequence is PMGGGVGGGSS. Aspartate 138 is an active-site residue.

It belongs to the GHMP kinase family. IspE subfamily.

The enzyme catalyses 4-CDP-2-C-methyl-D-erythritol + ATP = 4-CDP-2-C-methyl-D-erythritol 2-phosphate + ADP + H(+). The protein operates within isoprenoid biosynthesis; isopentenyl diphosphate biosynthesis via DXP pathway; isopentenyl diphosphate from 1-deoxy-D-xylulose 5-phosphate: step 3/6. In terms of biological role, catalyzes the phosphorylation of the position 2 hydroxy group of 4-diphosphocytidyl-2C-methyl-D-erythritol. The chain is 4-diphosphocytidyl-2-C-methyl-D-erythritol kinase from Alcanivorax borkumensis (strain ATCC 700651 / DSM 11573 / NCIMB 13689 / SK2).